The primary structure comprises 283 residues: Undecaprenyl-diphosphatase (283 aa).

A run of 7 helical transmembrane segments spans residues 1–21 (MDII…FLPI), 40–60 (GAAF…IYFY), 85–105 (SRMG…GLLF), 117–137 (YIIS…EYLV), 196–216 (FSFL…LLKV), 232–252 (VATV…LDYL), and 258–278 (YLFI…LSMG).

This sequence belongs to the UppP family.

The protein localises to the cell inner membrane. It carries out the reaction di-trans,octa-cis-undecaprenyl diphosphate + H2O = di-trans,octa-cis-undecaprenyl phosphate + phosphate + H(+). Catalyzes the dephosphorylation of undecaprenyl diphosphate (UPP). Confers resistance to bacitracin. The polypeptide is Undecaprenyl-diphosphatase (Chloroherpeton thalassium (strain ATCC 35110 / GB-78)).